Reading from the N-terminus, the 748-residue chain is Formate acetyltransferase (748 aa).

The 614-residue stretch at 5–618 folds into the PFL domain; the sequence is NNHTNAWQGF…KTGNTPDGRK (614 aa). Residue cysteine 412 is the S-acetylcysteine intermediate of the active site. Residue cysteine 413 is the Cysteine radical intermediate of the active site. One can recognise a Glycine radical domain in the interval 625–748; the sequence is PGANPMHGRD…VISRTFHESM (124 aa). Glycine 723 carries the post-translational modification Glycine radical.

Belongs to the glycyl radical enzyme (GRE) family. PFL subfamily. As to quaternary structure, homodimer.

Its subcellular location is the cytoplasm. The enzyme catalyses formate + acetyl-CoA = pyruvate + CoA. It functions in the pathway fermentation; pyruvate fermentation; formate from pyruvate: step 1/1. Functionally, catalyzes the conversion of pyruvate to formate and acetyl-CoA. The sequence is that of Formate acetyltransferase (pflB) from Staphylococcus epidermidis (strain ATCC 35984 / DSM 28319 / BCRC 17069 / CCUG 31568 / BM 3577 / RP62A).